The primary structure comprises 226 residues: MNPIVINRLQRKLGYTFNHQELLQQALTHRSASSKHNERLEFLGDSILSFVIANALYHRFPRVDEGDMSRMRATLVRGNTLAELAREFDLGECLRLGPGELKSGGFRRESILADTVEALIGGVFLDSNIQTVEQLILNWYKTRLDEISPGDKQKDPKTRLQEYLQGRHLPLPSYLVVQVRGEAHDQEFTIHCQVSGLSEPVVGTGSSRRKAEQAAAEQALKKLELE.

In terms of domain architecture, RNase III spans 6 to 128 (INRLQRKLGY…LIGGVFLDSN (123 aa)). E41 is a Mg(2+) binding site. D45 is an active-site residue. Residues D114 and E117 each coordinate Mg(2+). E117 is a catalytic residue. The region spanning 155 to 225 (DPKTRLQEYL…AEQALKKLEL (71 aa)) is the DRBM domain.

Belongs to the ribonuclease III family. In terms of assembly, homodimer. Requires Mg(2+) as cofactor.

The protein resides in the cytoplasm. The enzyme catalyses Endonucleolytic cleavage to 5'-phosphomonoester.. Digests double-stranded RNA. Involved in the processing of primary rRNA transcript to yield the immediate precursors to the large and small rRNAs (23S and 16S). Processes some mRNAs, and tRNAs when they are encoded in the rRNA operon. Processes pre-crRNA and tracrRNA of type II CRISPR loci if present in the organism. The sequence is that of Ribonuclease 3 from Salmonella enteritidis PT4 (strain P125109).